A 152-amino-acid chain; its full sequence is Lipoprotein signal peptidase (152 aa).

2 helical membrane-spanning segments follow: residues 55-75 (NKMW…VFYM) and 85-105 (LGIS…DRVF). Active-site residues include Asp111 and Asp129. Residues 124-144 (VFNIADSALCIGVVLIIIQTL) traverse the membrane as a helical segment.

It belongs to the peptidase A8 family.

The protein localises to the cell membrane. The catalysed reaction is Release of signal peptides from bacterial membrane prolipoproteins. Hydrolyzes -Xaa-Yaa-Zaa-|-(S,diacylglyceryl)Cys-, in which Xaa is hydrophobic (preferably Leu), and Yaa (Ala or Ser) and Zaa (Gly or Ala) have small, neutral side chains.. It participates in protein modification; lipoprotein biosynthesis (signal peptide cleavage). Functionally, this protein specifically catalyzes the removal of signal peptides from prolipoproteins. This Bacillus cereus (strain B4264) protein is Lipoprotein signal peptidase.